The sequence spans 205 residues: Guanylate kinase (205 aa).

Residues 6–185 form the Guanylate kinase-like domain; sequence GLLIVLSGPS…ACERIKAIVV (180 aa). Residue 13-20 participates in ATP binding; that stretch reads GPSGVGKG.

The protein belongs to the guanylate kinase family.

Its subcellular location is the cytoplasm. The catalysed reaction is GMP + ATP = GDP + ADP. In terms of biological role, essential for recycling GMP and indirectly, cGMP. The protein is Guanylate kinase of Bacillus anthracis.